Consider the following 401-residue polypeptide: MKHAYIVDAIRTPFGRYAGGLAAVRADDLGAIPIAALIERNPSVNWAQVDDVIYGCANQAGEDNRNVGRMSALLAGLPVEVPATTVNRLCGSSLDAIAMAARAIKAGEAHLIIAGGVESMSRAPYVMGKSEGAFGRTQKIEDTTMGWRFINPKLKAMYGVDTMPQTAENVAEQFGIQREDQDQFAYTSQQRTAAAQAKGYFAKEIVPVTIPQRKGEPVVIDTDEHPRASTTLEGLAKLKGVVKPEGSVTAGNASGINDGAAAVLIASDEAVAQYQLKARAKIIASTTVGIEPRIMGFAPAPAIKKLLKQANLTLDQMDVIELNEAFAAQALACTRDLGLADDDARVNPNGGAIALGHPLGASGARLVTTALNQLEQSGGKYALCSMCIGVGQGIALIIERV.

The active-site Acyl-thioester intermediate is Cys90. Catalysis depends on proton acceptor residues His357 and Cys387.

This sequence belongs to the thiolase-like superfamily. Thiolase family.

The catalysed reaction is succinyl-CoA + acetyl-CoA = 3-oxoadipyl-CoA + CoA. The protein operates within aromatic compound metabolism; beta-ketoadipate pathway; acetyl-CoA and succinyl-CoA from 3-oxoadipate: step 2/2. Its function is as follows. Catalyzes thiolytic cleavage of beta-ketoadipyl-CoA to succinyl-CoA and acetyl-CoA. The chain is Beta-ketoadipyl-CoA thiolase (pcaF) from Acinetobacter baylyi (strain ATCC 33305 / BD413 / ADP1).